An 801-amino-acid polypeptide reads, in one-letter code: N,N'-diacetylchitobiose phosphorylase (801 aa).

Residues arginine 333, arginine 343, arginine 349, aspartate 350, tryptophan 490, and aspartate 492 each coordinate N-acetyl-alpha-D-glucosamine 1-phosphate. Aspartate 492 serves as the catalytic Proton donor. Residues aspartate 492, lysine 636, and glutamate 637 each contribute to the N-acetyl-D-glucosamine site. N-acetyl-alpha-D-glucosamine 1-phosphate is bound by residues glutamate 637, histidine 644, glutamine 690, threonine 709, and glycine 710.

The protein belongs to the glycosyl hydrolase 94 family. As to quaternary structure, homodimer.

It carries out the reaction N,N'-diacetylchitobiose + phosphate = N-acetyl-alpha-D-glucosamine 1-phosphate + N-acetyl-D-glucosamine. Its function is as follows. Catalyzes the reversible phosphorolysis of chitobiose (N,N'-diacetylchitobiose or (GlcNAc)(2)) into N-acetyl-alpha-D-glucosamine 1-phosphate (GlcNAc-1-P) and N-acetyl-D-glucosamine (GlcNAc) with inversion of the anomeric configuration. In the synthetic reaction, is also active on glucose-1-phosphate with 10% activity as compared with that on GlcNAc-1-P. GlcNAc is the best acceptor substrate, but the enzyme can use aryl-beta-glycosides of GlcNAc as the acceptor substrate with 10-20% activities of GlcNAc. Shows no phosphorolytic activity on cellobiose. This Vibrio proteolyticus (Aeromonas proteolytica) protein is N,N'-diacetylchitobiose phosphorylase.